An 832-amino-acid chain; its full sequence is Elongation factor 2 (832 aa).

The tr-type G domain maps to 17-336 (HNIRNMSVIA…MIVTHLPSPA (320 aa)). 26–33 (AHVDHGKS) contributes to the GTP binding site. Phosphothreonine is present on residues Thr-57 and Thr-59. Residues 152–155 (NKVD) and 207–209 (SGL) contribute to the GTP site. The segment at 580-608 (AEPLPDGLTDDIEEGKVSPRDDPKERSNL) is disordered. Positions 593–608 (EGKVSPRDDPKERSNL) are enriched in basic and acidic residues. His-689 bears the Diphthamide mark.

The protein belongs to the TRAFAC class translation factor GTPase superfamily. Classic translation factor GTPase family. EF-G/EF-2 subfamily.

Its subcellular location is the cytoplasm. The catalysed reaction is GTP + H2O = GDP + phosphate + H(+). In terms of biological role, catalyzes the GTP-dependent ribosomal translocation step during translation elongation. During this step, the ribosome changes from the pre-translocational (PRE) to the post-translocational (POST) state as the newly formed A-site-bound peptidyl-tRNA and P-site-bound deacylated tRNA move to the P and E sites, respectively. Catalyzes the coordinated movement of the two tRNA molecules, the mRNA and conformational changes in the ribosome. The polypeptide is Elongation factor 2 (Cryptosporidium parvum).